The chain runs to 234 residues: Staphylococcal superantigen-like 5 (234 aa).

The first 30 residues, M1 to A30, serve as a signal peptide directing secretion.

Belongs to the staphylococcal/streptococcal toxin family. In terms of assembly, interacts with host SELPLG; this interaction prevents SELPLG-mediated neutrophil rolling. Interacts with host MMP9 (via sialic acid-containing O-glycans); this interaction inhibits MMP9 activity. Interacts with host GP1BA and GP6; these interactions play an important role in platelet binding and activation.

Functionally, secreted protein that plays a role in the inhibition of host innate immune system. Modulates the interaction between host SELPLG and P-selectin thereby preventing initial rolling of neutrophils toward the site of infection. Interferes with leukocyte trafficking by inhibiting host metalloproteinase-9/MMP9 activity. Also associates with two different platelet surface receptors GP1A and GP6 leading to platelet activation and aggregation. The sequence is that of Staphylococcal superantigen-like 5 from Staphylococcus aureus (strain NCTC 8325 / PS 47).